Here is a 254-residue protein sequence, read N- to C-terminus: Thiazole synthase (254 aa).

The Schiff-base intermediate with DXP role is filled by Lys95. 1-deoxy-D-xylulose 5-phosphate-binding positions include Gly156, 182–183 (AG), and 204–205 (NT).

It belongs to the ThiG family. Homotetramer. Forms heterodimers with either ThiH or ThiS.

Its subcellular location is the cytoplasm. It carries out the reaction [ThiS sulfur-carrier protein]-C-terminal-Gly-aminoethanethioate + 2-iminoacetate + 1-deoxy-D-xylulose 5-phosphate = [ThiS sulfur-carrier protein]-C-terminal Gly-Gly + 2-[(2R,5Z)-2-carboxy-4-methylthiazol-5(2H)-ylidene]ethyl phosphate + 2 H2O + H(+). It functions in the pathway cofactor biosynthesis; thiamine diphosphate biosynthesis. In terms of biological role, catalyzes the rearrangement of 1-deoxy-D-xylulose 5-phosphate (DXP) to produce the thiazole phosphate moiety of thiamine. Sulfur is provided by the thiocarboxylate moiety of the carrier protein ThiS. In vitro, sulfur can be provided by H(2)S. This Shewanella oneidensis (strain ATCC 700550 / JCM 31522 / CIP 106686 / LMG 19005 / NCIMB 14063 / MR-1) protein is Thiazole synthase.